The sequence spans 326 residues: MMTAEVTAADAEVLLAQPRGFCAGVDRAIDIVERALELHGAPIYVRHEIVHNRYVVEDLRGKGAVFIDELDQAPAGAIVVFSAHGVSQAVRGEAEARGLRVFDATCPLVTKVHIEVARMRAAGREIVMIGHKGHPEVEGTLGQAQGGMYLVETVEDVAALRVSDPGNLAYVTQTTLSVDDAAAVAGALKARFPGIVEPKKSDICYATQNRQDAVKLLAPECDLVLVVGSTNSSNSNRLREVAERKGVAAYLIDGAHAIDPAWLQGRRSIGITAGASAPEVLVQQVVERVRELGAVSVRTMPGLEESVAFPLPKGLSRKIAQTESLE.

Cys-22 is a binding site for [4Fe-4S] cluster. His-51 and His-84 together coordinate (2E)-4-hydroxy-3-methylbut-2-enyl diphosphate. Positions 51 and 84 each coordinate dimethylallyl diphosphate. Isopentenyl diphosphate is bound by residues His-51 and His-84. Position 106 (Cys-106) interacts with [4Fe-4S] cluster. His-134 provides a ligand contact to (2E)-4-hydroxy-3-methylbut-2-enyl diphosphate. His-134 contacts dimethylallyl diphosphate. His-134 contributes to the isopentenyl diphosphate binding site. The Proton donor role is filled by Glu-136. Thr-174 contributes to the (2E)-4-hydroxy-3-methylbut-2-enyl diphosphate binding site. Position 204 (Cys-204) interacts with [4Fe-4S] cluster. The (2E)-4-hydroxy-3-methylbut-2-enyl diphosphate site is built by Ser-232, Ser-233, Asn-234, and Ser-276. Dimethylallyl diphosphate-binding residues include Ser-232, Ser-233, Asn-234, and Ser-276. Residues Ser-232, Ser-233, Asn-234, and Ser-276 each coordinate isopentenyl diphosphate.

It belongs to the IspH family. It depends on [4Fe-4S] cluster as a cofactor.

It catalyses the reaction isopentenyl diphosphate + 2 oxidized [2Fe-2S]-[ferredoxin] + H2O = (2E)-4-hydroxy-3-methylbut-2-enyl diphosphate + 2 reduced [2Fe-2S]-[ferredoxin] + 2 H(+). The catalysed reaction is dimethylallyl diphosphate + 2 oxidized [2Fe-2S]-[ferredoxin] + H2O = (2E)-4-hydroxy-3-methylbut-2-enyl diphosphate + 2 reduced [2Fe-2S]-[ferredoxin] + 2 H(+). Its pathway is isoprenoid biosynthesis; dimethylallyl diphosphate biosynthesis; dimethylallyl diphosphate from (2E)-4-hydroxy-3-methylbutenyl diphosphate: step 1/1. The protein operates within isoprenoid biosynthesis; isopentenyl diphosphate biosynthesis via DXP pathway; isopentenyl diphosphate from 1-deoxy-D-xylulose 5-phosphate: step 6/6. Functionally, catalyzes the conversion of 1-hydroxy-2-methyl-2-(E)-butenyl 4-diphosphate (HMBPP) into a mixture of isopentenyl diphosphate (IPP) and dimethylallyl diphosphate (DMAPP). Acts in the terminal step of the DOXP/MEP pathway for isoprenoid precursor biosynthesis. This Bordetella bronchiseptica (strain ATCC BAA-588 / NCTC 13252 / RB50) (Alcaligenes bronchisepticus) protein is 4-hydroxy-3-methylbut-2-enyl diphosphate reductase.